We begin with the raw amino-acid sequence, 266 residues long: Glucosamine-6-phosphate deaminase 1 (266 aa).

Asp-67 serves as the catalytic Proton acceptor; for enolization step. Catalysis depends on Asn-136, which acts as the For ring-opening step. The Proton acceptor; for ring-opening step role is filled by His-138. Glu-143 (for ring-opening step) is an active-site residue.

The protein belongs to the glucosamine/galactosamine-6-phosphate isomerase family. In terms of assembly, homohexamer.

It is found in the cytoplasm. The enzyme catalyses alpha-D-glucosamine 6-phosphate + H2O = beta-D-fructose 6-phosphate + NH4(+). In terms of biological role, catalyzes the reversible conversion of alpha-D-glucosamine 6-phosphate (GlcN-6P) into beta-D-fructose 6-phosphate (Fru-6P) and ammonium ion, a regulatory reaction step in de novo uridine diphosphate-N-acetyl-alpha-D-glucosamine (UDP-GlcNAc) biosynthesis via hexosamine pathway. The polypeptide is Glucosamine-6-phosphate deaminase 1 (GPI1) (Giardia intestinalis (Giardia lamblia)).